Reading from the N-terminus, the 1407-residue chain is YEATS domain-containing protein 2 (1407 aa).

Residue lysine 9 forms a Glycyl lysine isopeptide (Lys-Gly) (interchain with G-Cter in SUMO2) linkage. Positions 54-80 (MKNKEHEIDVIDQRLIEARRMMDKLRA) form a coiled coil. Residue lysine 113 forms a Glycyl lysine isopeptide (Lys-Gly) (interchain with G-Cter in SUMO2) linkage. Residues 116–196 (LESPSRSSSP…SHKRELRNAD (81 aa)) are disordered. 3 positions are modified to phosphoserine: serine 118, serine 120, and serine 157. Positions 119-148 (PSRSSSPTNQRSETPSANHSESDSLSQHND) are enriched in polar residues. Positions 149 to 165 (FLSDKDNNSNVDVEERP) are enriched in basic and acidic residues. A Glycyl lysine isopeptide (Lys-Gly) (interchain with G-Cter in SUMO2) cross-link involves residue lysine 189. The YEATS domain occupies 201-346 (ETSRLFVKKT…EDSVYPQSSE (146 aa)). 2 histone H3K27cr binding regions span residues 260–262 (HPS) and 283–285 (WGE). Position 406 is a phosphothreonine (threonine 406). A phosphoserine mark is found at serine 446, serine 462, serine 464, serine 470, and serine 472. Positions 462–540 (SGSPISTPSP…GTGSPIPKIH (79 aa)) are disordered. Threonine 477 bears the Phosphothreonine mark. Lysine 486 is covalently cross-linked (Glycyl lysine isopeptide (Lys-Gly) (interchain with G-Cter in SUMO2)). Residues 511-520 (STPSTGSPTS) are compositionally biased toward low complexity. Serine 534 carries the post-translational modification Phosphoserine. Lysine 550 participates in a covalent cross-link: Glycyl lysine isopeptide (Lys-Gly) (interchain with G-Cter in SUMO2). Serine 573 carries the phosphoserine modification. Lysine 590 is covalently cross-linked (Glycyl lysine isopeptide (Lys-Gly) (interchain with G-Cter in SUMO2)). Serine 625 is subject to Phosphoserine. Glycyl lysine isopeptide (Lys-Gly) (interchain with G-Cter in SUMO2) cross-links involve residues lysine 647 and lysine 771. The interval 791–833 (SGSAAAGGSGSSGAGGGSGGGGGSGAGGTPSTSGPGGGPQHLT) is disordered. The segment covering 795 to 829 (AAGGSGSSGAGGGSGGGGGSGAGGTPSTSGPGGGP) has biased composition (gly residues). Lysine 908 is covalently cross-linked (Glycyl lysine isopeptide (Lys-Gly) (interchain with G-Cter in SUMO2)). Residue lysine 1095 forms a Glycyl lysine isopeptide (Lys-Gly) (interchain with G-Cter in SUMO1); alternate linkage. Residue lysine 1095 forms a Glycyl lysine isopeptide (Lys-Gly) (interchain with G-Cter in SUMO2); alternate linkage. Lysine 1115 is covalently cross-linked (Glycyl lysine isopeptide (Lys-Gly) (interchain with G-Cter in SUMO2)). Threonine 1204 carries the phosphothreonine modification. Residues lysine 1207 and lysine 1270 each participate in a glycyl lysine isopeptide (Lys-Gly) (interchain with G-Cter in SUMO2) cross-link.

As to quaternary structure, component of the ADA2A-containing complex (ATAC), composed of KAT14, KAT2A, TADA2L, TADA3L, ZZ3, MBIP, WDR5, YEATS2, SGF29 and DR1.

It localises to the nucleus. In terms of biological role, chromatin reader component of the ATAC complex, a complex with histone acetyltransferase activity on histones H3 and H4. YEATS2 specifically recognizes and binds histone H3 crotonylated at 'Lys-27' (H3K27cr). Crotonylation marks active promoters and enhancers and confers resistance to transcriptional repressors. The chain is YEATS domain-containing protein 2 from Mus musculus (Mouse).